Here is a 153-residue protein sequence, read N- to C-terminus: Ribosomal RNA large subunit methyltransferase H (153 aa).

Residues I75, G103, and 121 to 126 (LSAMTF) each bind S-adenosyl-L-methionine.

It belongs to the RNA methyltransferase RlmH family. As to quaternary structure, homodimer.

Its subcellular location is the cytoplasm. It catalyses the reaction pseudouridine(1915) in 23S rRNA + S-adenosyl-L-methionine = N(3)-methylpseudouridine(1915) in 23S rRNA + S-adenosyl-L-homocysteine + H(+). Its function is as follows. Specifically methylates the pseudouridine at position 1915 (m3Psi1915) in 23S rRNA. This chain is Ribosomal RNA large subunit methyltransferase H, found in Helicobacter hepaticus (strain ATCC 51449 / 3B1).